The chain runs to 255 residues: Thiazole synthase (255 aa).

Lys-95 (schiff-base intermediate with DXP) is an active-site residue. 1-deoxy-D-xylulose 5-phosphate is bound by residues Gly-156, 182–183 (AG), and 204–205 (NT).

It belongs to the ThiG family. In terms of assembly, homotetramer. Forms heterodimers with either ThiH or ThiS.

Its subcellular location is the cytoplasm. It catalyses the reaction [ThiS sulfur-carrier protein]-C-terminal-Gly-aminoethanethioate + 2-iminoacetate + 1-deoxy-D-xylulose 5-phosphate = [ThiS sulfur-carrier protein]-C-terminal Gly-Gly + 2-[(2R,5Z)-2-carboxy-4-methylthiazol-5(2H)-ylidene]ethyl phosphate + 2 H2O + H(+). It functions in the pathway cofactor biosynthesis; thiamine diphosphate biosynthesis. Functionally, catalyzes the rearrangement of 1-deoxy-D-xylulose 5-phosphate (DXP) to produce the thiazole phosphate moiety of thiamine. Sulfur is provided by the thiocarboxylate moiety of the carrier protein ThiS. In vitro, sulfur can be provided by H(2)S. The chain is Thiazole synthase from Vibrio parahaemolyticus serotype O3:K6 (strain RIMD 2210633).